Reading from the N-terminus, the 276-residue chain is MPELPEVENVRRTLENLVTGKTIEDVIVTYPKIVKRPDDAEIFKEMLKGEKIENIKRRGKFLLLYVTNYVIVSHLRMEGKFLLHQEDEPIDKHTHVRFLFTDGTELHYKDVRKFGTMHLFKKGEEMNQMPLADLGPEPFDAEMTPQYLQERLQKTNRKIKVVLLDQRLLVGLGNIYVDEVLFRSQIHPEREASSLTVEEIERIYEATVTTLGEAVKRGGSTIRTYINSQGQIGSFQELLNVYGKKGEPCVTCGTILEKTVVGGRGTHYCPICQPRI.

The Schiff-base intermediate with DNA role is filled by P2. Catalysis depends on E3, which acts as the Proton donor. The Proton donor; for beta-elimination activity role is filled by K60. DNA-binding residues include H93 and R112. The FPG-type zinc-finger motif lies at 240–274 (NVYGKKGEPCVTCGTILEKTVVGGRGTHYCPICQP). The active-site Proton donor; for delta-elimination activity is R264.

The protein belongs to the FPG family. Monomer. Zn(2+) serves as cofactor.

The enzyme catalyses Hydrolysis of DNA containing ring-opened 7-methylguanine residues, releasing 2,6-diamino-4-hydroxy-5-(N-methyl)formamidopyrimidine.. It carries out the reaction 2'-deoxyribonucleotide-(2'-deoxyribose 5'-phosphate)-2'-deoxyribonucleotide-DNA = a 3'-end 2'-deoxyribonucleotide-(2,3-dehydro-2,3-deoxyribose 5'-phosphate)-DNA + a 5'-end 5'-phospho-2'-deoxyribonucleoside-DNA + H(+). Its function is as follows. Involved in base excision repair of DNA damaged by oxidation or by mutagenic agents. Acts as a DNA glycosylase that recognizes and removes damaged bases. Has a preference for oxidized purines, such as 7,8-dihydro-8-oxoguanine (8-oxoG). Has AP (apurinic/apyrimidinic) lyase activity and introduces nicks in the DNA strand. Cleaves the DNA backbone by beta-delta elimination to generate a single-strand break at the site of the removed base with both 3'- and 5'-phosphates. The chain is Formamidopyrimidine-DNA glycosylase from Bacillus cereus (strain ATCC 14579 / DSM 31 / CCUG 7414 / JCM 2152 / NBRC 15305 / NCIMB 9373 / NCTC 2599 / NRRL B-3711).